The primary structure comprises 215 residues: MATPGFPSTEQRLGLYPVVDSLLWIERLLAAGVTTLQLRIKNADDAQVEQDIVAAIELGKRYQARLFINDYWQLAVKHGAYGVHLGQEDLEAADLAAIQQAGLRLGISTHDEHELAVAKTLRPSYIALGHIFPTQTKQMPSSPQGLASLSRQVKNTPDYPTVAIGGISIERVPHVLATGVGSVAVVSAITLASDWQRATAQLLHLIEGKELADEK.

4-amino-2-methyl-5-(diphosphooxymethyl)pyrimidine-binding positions include 37–41 (QLRIK) and Asn69. Residues Asp70 and Asp89 each coordinate Mg(2+). Ser108 serves as a coordination point for 4-amino-2-methyl-5-(diphosphooxymethyl)pyrimidine. 134–136 (TQT) serves as a coordination point for 2-[(2R,5Z)-2-carboxy-4-methylthiazol-5(2H)-ylidene]ethyl phosphate. Position 137 (Lys137) interacts with 4-amino-2-methyl-5-(diphosphooxymethyl)pyrimidine. 2-[(2R,5Z)-2-carboxy-4-methylthiazol-5(2H)-ylidene]ethyl phosphate is bound by residues Gly166 and 186-187 (VS).

The protein belongs to the thiamine-phosphate synthase family. It depends on Mg(2+) as a cofactor.

The catalysed reaction is 2-[(2R,5Z)-2-carboxy-4-methylthiazol-5(2H)-ylidene]ethyl phosphate + 4-amino-2-methyl-5-(diphosphooxymethyl)pyrimidine + 2 H(+) = thiamine phosphate + CO2 + diphosphate. The enzyme catalyses 2-(2-carboxy-4-methylthiazol-5-yl)ethyl phosphate + 4-amino-2-methyl-5-(diphosphooxymethyl)pyrimidine + 2 H(+) = thiamine phosphate + CO2 + diphosphate. It carries out the reaction 4-methyl-5-(2-phosphooxyethyl)-thiazole + 4-amino-2-methyl-5-(diphosphooxymethyl)pyrimidine + H(+) = thiamine phosphate + diphosphate. It participates in cofactor biosynthesis; thiamine diphosphate biosynthesis; thiamine phosphate from 4-amino-2-methyl-5-diphosphomethylpyrimidine and 4-methyl-5-(2-phosphoethyl)-thiazole: step 1/1. Functionally, condenses 4-methyl-5-(beta-hydroxyethyl)thiazole monophosphate (THZ-P) and 2-methyl-4-amino-5-hydroxymethyl pyrimidine pyrophosphate (HMP-PP) to form thiamine monophosphate (TMP). This chain is Thiamine-phosphate synthase, found in Yersinia pestis (strain Pestoides F).